Consider the following 298-residue polypeptide: Glycine--tRNA ligase alpha subunit (298 aa).

This sequence belongs to the class-II aminoacyl-tRNA synthetase family. In terms of assembly, tetramer of two alpha and two beta subunits.

It is found in the cytoplasm. It carries out the reaction tRNA(Gly) + glycine + ATP = glycyl-tRNA(Gly) + AMP + diphosphate. The sequence is that of Glycine--tRNA ligase alpha subunit from Helicobacter acinonychis (strain Sheeba).